Consider the following 338-residue polypeptide: UPF0104 membrane protein MTH_1261 (338 aa).

8 helical membrane-spanning segments follow: residues Ala-6–Gly-26, Asp-36–Leu-56, Leu-124–Phe-144, Trp-149–Leu-169, Ile-231–Gly-251, Ile-254–Leu-274, Leu-275–Val-295, and Ile-310–Val-330.

The protein belongs to the UPF0104 family.

The protein resides in the cell membrane. In Methanothermobacter thermautotrophicus (strain ATCC 29096 / DSM 1053 / JCM 10044 / NBRC 100330 / Delta H) (Methanobacterium thermoautotrophicum), this protein is UPF0104 membrane protein MTH_1261.